The primary structure comprises 167 residues: Ribosome maturation factor RimM (167 aa).

Residues 94 to 165 enclose the PRC barrel domain; that stretch reads ENEYYYSDII…TIRITPMEGL (72 aa).

The protein belongs to the RimM family. In terms of assembly, binds ribosomal protein uS19.

It localises to the cytoplasm. In terms of biological role, an accessory protein needed during the final step in the assembly of 30S ribosomal subunit, possibly for assembly of the head region. Essential for efficient processing of 16S rRNA. May be needed both before and after RbfA during the maturation of 16S rRNA. It has affinity for free ribosomal 30S subunits but not for 70S ribosomes. This Staphylococcus haemolyticus (strain JCSC1435) protein is Ribosome maturation factor RimM.